The primary structure comprises 351 residues: Probable aldo-keto reductase 2 (351 aa).

The Proton donor role is filled by Tyr-67. Position 134 (His-134) interacts with substrate. 213 to 223 (SPLGRGFFSAG) is an NADP(+) binding site. A disordered region spans residues 317–351 (YASTDDVRGDRYPQAMANTTWQNSETPPLSSWKAQ). Residues 332-351 (MANTTWQNSETPPLSSWKAQ) show a composition bias toward polar residues.

Belongs to the aldo/keto reductase family.

The chain is Probable aldo-keto reductase 2 from Oryza sativa subsp. indica (Rice).